A 473-amino-acid polypeptide reads, in one-letter code: 3-isopropylmalate dehydratase large subunit (473 aa).

[4Fe-4S] cluster-binding residues include C348, C413, and C416.

It belongs to the aconitase/IPM isomerase family. LeuC type 1 subfamily. In terms of assembly, heterodimer of LeuC and LeuD. Requires [4Fe-4S] cluster as cofactor.

The catalysed reaction is (2R,3S)-3-isopropylmalate = (2S)-2-isopropylmalate. The protein operates within amino-acid biosynthesis; L-leucine biosynthesis; L-leucine from 3-methyl-2-oxobutanoate: step 2/4. Its function is as follows. Catalyzes the isomerization between 2-isopropylmalate and 3-isopropylmalate, via the formation of 2-isopropylmaleate. In Parvibaculum lavamentivorans (strain DS-1 / DSM 13023 / NCIMB 13966), this protein is 3-isopropylmalate dehydratase large subunit.